Consider the following 226-residue polypeptide: Thiamine-phosphate synthase (226 aa).

Residues 46–50 and Asn-87 contribute to the 4-amino-2-methyl-5-(diphosphooxymethyl)pyrimidine site; that span reads QLRDK. 2 residues coordinate Mg(2+): Asp-88 and Asp-107. 4-amino-2-methyl-5-(diphosphooxymethyl)pyrimidine is bound at residue Ser-126. 152 to 154 provides a ligand contact to 2-[(2R,5Z)-2-carboxy-4-methylthiazol-5(2H)-ylidene]ethyl phosphate; sequence TPT. Lys-155 serves as a coordination point for 4-amino-2-methyl-5-(diphosphooxymethyl)pyrimidine. Residue Gly-183 coordinates 2-[(2R,5Z)-2-carboxy-4-methylthiazol-5(2H)-ylidene]ethyl phosphate.

It belongs to the thiamine-phosphate synthase family. Mg(2+) is required as a cofactor.

It carries out the reaction 2-[(2R,5Z)-2-carboxy-4-methylthiazol-5(2H)-ylidene]ethyl phosphate + 4-amino-2-methyl-5-(diphosphooxymethyl)pyrimidine + 2 H(+) = thiamine phosphate + CO2 + diphosphate. It catalyses the reaction 2-(2-carboxy-4-methylthiazol-5-yl)ethyl phosphate + 4-amino-2-methyl-5-(diphosphooxymethyl)pyrimidine + 2 H(+) = thiamine phosphate + CO2 + diphosphate. The enzyme catalyses 4-methyl-5-(2-phosphooxyethyl)-thiazole + 4-amino-2-methyl-5-(diphosphooxymethyl)pyrimidine + H(+) = thiamine phosphate + diphosphate. The protein operates within cofactor biosynthesis; thiamine diphosphate biosynthesis; thiamine phosphate from 4-amino-2-methyl-5-diphosphomethylpyrimidine and 4-methyl-5-(2-phosphoethyl)-thiazole: step 1/1. Condenses 4-methyl-5-(beta-hydroxyethyl)thiazole monophosphate (THZ-P) and 2-methyl-4-amino-5-hydroxymethyl pyrimidine pyrophosphate (HMP-PP) to form thiamine monophosphate (TMP). The sequence is that of Thiamine-phosphate synthase from Mycobacterium sp. (strain JLS).